Consider the following 422-residue polypeptide: Probable metallocarboxypeptidase A (422 aa).

An N-terminal signal peptide occupies residues 1–17; it reads MRSVLSLALLAANVVTA. The propeptide at 18-112 is activation peptide; the sequence is AVVAPFDYSG…FEAYSAGYAP (95 aa). The 301-residue stretch at 119–419 folds into the Peptidase M14 domain; it reads SYHSYQDHLS…AGTVAMLKAV (301 aa). Residues His179 and Glu182 each contribute to the Zn(2+) site. Substrate is bound by residues 179–182, Arg237, and 254–255; these read HARE and NR. Cys248 and Cys271 form a disulfide bridge. His309 contacts Zn(2+). 310–311 is a binding site for substrate; it reads SY. The Proton donor/acceptor role is filled by Glu385.

It belongs to the peptidase M14 family. The cofactor is Zn(2+).

It is found in the secreted. Its function is as follows. Extracellular metalloprotease that contributes to pathogenicity. This is Probable metallocarboxypeptidase A (MCPA) from Arthroderma benhamiae (strain ATCC MYA-4681 / CBS 112371) (Trichophyton mentagrophytes).